The primary structure comprises 416 residues: MSKADIIVGIQWGDEGKGKVVDKLCENYDFVCRSAGGHNAGHTIWVNGVRYALHLMPSGVLHPRCINIIGNGVVVSPEVLIAEMAQFENLKGRLYISDRAHLNLKHHSLIDIAKEKLKGKNAIGTTGKGIGPSYADKINRTGHRVGELLEPQRLCEALMKDFEANKTFFEMLEIEIPSAEELLADLKRFNEILTPYITDTTRMLWKALDEDKRVLLEGAQGSMLDIDHGTYPYVTSSSTISAGALTGLGLNPKEAGNIIGIVKAYATRVGNGAFPTEDKGEDGEKIAQIGKEIGVSTGRKRRCGWFDAVAVRYTARLNGLDALSLMKLDVLDGFEKIKICRAYEYKGMEIDYIPSDLENVQPIYEEMDGWDKVFGIKDYDLLPENAKKYIARLEELAGVKVKYISTSPERDDTIIL.

GTP is bound by residues 13–19 (GDEGKGK) and 41–43 (GHT). D14 acts as the Proton acceptor in catalysis. 2 residues coordinate Mg(2+): D14 and G41. IMP contacts are provided by residues 14 to 17 (DEGK), 39 to 42 (NAGH), T126, R140, Q220, T235, and R299. H42 functions as the Proton donor in the catalytic mechanism. Residue 295-301 (VSTGRKR) coordinates substrate. GTP-binding positions include R301, 327–329 (KLD), and 405–407 (STS).

The protein belongs to the adenylosuccinate synthetase family. In terms of assembly, homodimer. Mg(2+) is required as a cofactor.

The protein localises to the cytoplasm. It catalyses the reaction IMP + L-aspartate + GTP = N(6)-(1,2-dicarboxyethyl)-AMP + GDP + phosphate + 2 H(+). The protein operates within purine metabolism; AMP biosynthesis via de novo pathway; AMP from IMP: step 1/2. Its function is as follows. Plays an important role in the de novo pathway of purine nucleotide biosynthesis. Catalyzes the first committed step in the biosynthesis of AMP from IMP. The polypeptide is Adenylosuccinate synthetase (Campylobacter jejuni subsp. jejuni serotype O:6 (strain 81116 / NCTC 11828)).